Reading from the N-terminus, the 275-residue chain is Serine/threonine-protein phosphatase PGAM5, mitochondrial (275 aa).

The helical transmembrane segment at 7-24 (LIAGGSAAAAILGVVAAG) threads the bilayer.

Belongs to the phosphoglycerate mutase family. BPG-dependent PGAM subfamily. Post-translationally, phosphorylated by the RIPK1/RIPK3 complex under necrotic conditions. This phosphorylation increases PGAM5 phosphatase activity.

The protein localises to the mitochondrion outer membrane. It carries out the reaction O-phospho-L-seryl-[protein] + H2O = L-seryl-[protein] + phosphate. The catalysed reaction is O-phospho-L-threonyl-[protein] + H2O = L-threonyl-[protein] + phosphate. Displays phosphatase activity for serine/threonine residues. Has apparently no phosphoglycerate mutase activity. May be regulator of mitochondrial dynamics. May be a central mediator for programmed necrosis. The polypeptide is Serine/threonine-protein phosphatase PGAM5, mitochondrial (pgam5) (Xenopus laevis (African clawed frog)).